A 322-amino-acid polypeptide reads, in one-letter code: Beta-ketoacyl-[acyl-carrier-protein] synthase III (322 aa).

Active-site residues include Cys-113 and His-249. Positions 250–254 (QANVR) are ACP-binding. Asn-279 is an active-site residue.

It belongs to the thiolase-like superfamily. FabH family. As to quaternary structure, homodimer.

Its subcellular location is the cytoplasm. It carries out the reaction malonyl-[ACP] + acetyl-CoA + H(+) = 3-oxobutanoyl-[ACP] + CO2 + CoA. The protein operates within lipid metabolism; fatty acid biosynthesis. In terms of biological role, catalyzes the condensation reaction of fatty acid synthesis by the addition to an acyl acceptor of two carbons from malonyl-ACP. Catalyzes the first condensation reaction which initiates fatty acid synthesis and may therefore play a role in governing the total rate of fatty acid production. Possesses both acetoacetyl-ACP synthase and acetyl transacylase activities. Its substrate specificity determines the biosynthesis of branched-chain and/or straight-chain of fatty acids. The protein is Beta-ketoacyl-[acyl-carrier-protein] synthase III of Anaplasma marginale (strain St. Maries).